Consider the following 436-residue polypeptide: 3-ketoacyl-CoA thiolase (436 aa).

Cys-99 (acyl-thioester intermediate) is an active-site residue. Catalysis depends on proton acceptor residues His-392 and Cys-422.

The protein belongs to the thiolase-like superfamily. Thiolase family. Heterotetramer of two alpha chains (FadJ) and two beta chains (FadI).

It localises to the cytoplasm. The catalysed reaction is an acyl-CoA + acetyl-CoA = a 3-oxoacyl-CoA + CoA. It functions in the pathway lipid metabolism; fatty acid beta-oxidation. Functionally, catalyzes the final step of fatty acid oxidation in which acetyl-CoA is released and the CoA ester of a fatty acid two carbons shorter is formed. This chain is 3-ketoacyl-CoA thiolase, found in Escherichia coli O6:H1 (strain CFT073 / ATCC 700928 / UPEC).